The sequence spans 216 residues: Sperm microtubule inner protein 8 (216 aa).

As to quaternary structure, microtubule inner protein component of sperm flagellar doublet microtubules. As to expression, expressed in testis.

The protein localises to the cytoplasm. It localises to the cytoskeleton. Its subcellular location is the flagellum axoneme. Microtubule inner protein (MIP) part of the dynein-decorated doublet microtubules (DMTs) in flagellum axoneme. May serve to reinforce and thus stabilize the microtubule structure in the sperm flagella. This Mus musculus (Mouse) protein is Sperm microtubule inner protein 8 (Spmip8).